The following is a 60-amino-acid chain: Large ribosomal subunit protein bL32 (60 aa).

Residues 1–22 (MAVPKKKTSKSRRDMRRSHHAL) are compositionally biased toward basic residues. Positions 1 to 27 (MAVPKKKTSKSRRDMRRSHHALKGSAY) are disordered.

It belongs to the bacterial ribosomal protein bL32 family.

This is Large ribosomal subunit protein bL32 from Rhodospirillum centenum (strain ATCC 51521 / SW).